We begin with the raw amino-acid sequence, 48 residues long: AVYVASPYAAGYGYGYAYPYAAAAYRAAPVVGAYAAYPYGVATYPYYY.

Component of the cuticle of migratory locust which contains more than 100 different structural proteins. This is Cuticle protein 5.1 from Locusta migratoria (Migratory locust).